A 531-amino-acid chain; its full sequence is Non-muscle caldesmon (531 aa).

The interval 20-200 (AYQRNDDDEE…LKGGNLGENQ (181 aa)) is myosin and calmodulin-binding. Residues 21–379 (YQRNDDDEEE…KKPFKCFTPK (359 aa)) form a disordered region. Over residues 41-50 (QERLRQKQEE) the composition is skewed to basic and acidic residues. The segment covering 54–68 (GQVTDQVEAHVQNSA) has biased composition (polar residues). Residues 93-116 (RLARREERRQKRLQEALERQKEFD) show a composition bias toward basic and acidic residues. The span at 120–133 (TDGSLSVPSRRMQN) shows a compositional bias: polar residues. Position 123 is a phosphoserine (serine 123). Residues 143 to 156 (GEEKGESRSGRYEM) are compositionally biased toward basic and acidic residues. Polar residues predominate over residues 162–172 (VITSYQKNSYQ). The segment covering 200 to 227 (QIKDEKIKKDKEPKEEVKNFLDRKKGFT) has biased composition (basic and acidic residues). The residue at position 249 (serine 249) is a Phosphoserine; by CDK1. 2 stretches are compositionally biased toward basic and acidic residues: residues 271–297 (AGKR…KQKQ) and 305–372 (EELK…DKKP). The interval 303–360 (ELEELKKKREERRKVLEEEEQRRKQEEADRKAREEEEKRRLKEEIERRRAEAAEKRQK) is tropomyosin-binding. Phosphoserine is present on serine 382. Residue lysine 384 forms a Glycyl lysine isopeptide (Lys-Gly) (interchain with G-Cter in SUMO2) linkage. Residues 392-424 (LNKSVQKSGVKSTHQAAVVSKIDSRLEQYTNAI) are strong actin-binding. The residue at position 395 (serine 395) is a Phosphoserine. A tropomyosin-binding region spans residues 402–412 (KSTHQAAVVSK). Residues 454–460 (WEKGSVF) form a calmodulin-binding region. Positions 458–531 (SVFSSPSASG…VDKVTSPTKV (74 aa)) are disordered. Polar residues predominate over residues 459-471 (VFSSPSASGTPNK). Serine 462 carries the phosphoserine; by CDK1 modification. Threonine 468 carries the phosphothreonine; by CDK1 modification. Phosphoserine; by CDK1 occurs at positions 491 and 497. Over residues 503–522 (SDLRPGDVSGKRNLWEKQSV) the composition is skewed to basic and acidic residues. The interval 506–531 (RPGDVSGKRNLWEKQSVDKVTSPTKV) is weak actin-binding. Serine 527 is subject to Phosphoserine; by CDK1.

It belongs to the caldesmon family. Post-translationally, in non-muscle cells, phosphorylation by CDK1 during mitosis causes caldesmon to dissociate from microfilaments. Phosphorylation reduces caldesmon binding to actin, myosin, and calmodulin as well as its inhibition of actomyosin ATPase activity. Phosphorylation also occurs in both quiescent and dividing smooth muscle cells with similar effects on the interaction with actin and calmodulin and on microfilaments reorganization. CDK1-mediated phosphorylation promotes Schwann cell migration during peripheral nerve regeneration. In terms of tissue distribution, high-molecular-weight caldesmon (h-caldesmon) is predominantly expressed in smooth muscles, whereas low-molecular-weight caldesmon (l-caldesmon) is widely distributed in non-muscle tissues and cells. Not expressed in skeletal muscle or heart.

The protein resides in the cytoplasm. It is found in the cytoskeleton. Its subcellular location is the myofibril. It localises to the stress fiber. Actin- and myosin-binding protein implicated in the regulation of actomyosin interactions in smooth muscle and nonmuscle cells (could act as a bridge between myosin and actin filaments). Stimulates actin binding of tropomyosin which increases the stabilization of actin filament structure. In muscle tissues, inhibits the actomyosin ATPase by binding to F-actin. This inhibition is attenuated by calcium-calmodulin and is potentiated by tropomyosin. Interacts with actin, myosin, two molecules of tropomyosin and with calmodulin. Also plays an essential role during cellular mitosis and receptor capping. Involved in Schwann cell migration during peripheral nerve regeneration. The polypeptide is Non-muscle caldesmon (Cald1) (Rattus norvegicus (Rat)).